The sequence spans 72 residues: UPF0337 protein bsl2407 (72 aa).

Residues 1 to 55 are disordered; that stretch reads MGSTTDKIKGNANEAIGKAKQGIGEATGSDRLKGEGVVQEVKGKGQQAMGDAKDA. Positions 35–47 are enriched in low complexity; that stretch reads EGVVQEVKGKGQQ.

It belongs to the UPF0337 (CsbD) family.

In Bradyrhizobium diazoefficiens (strain JCM 10833 / BCRC 13528 / IAM 13628 / NBRC 14792 / USDA 110), this protein is UPF0337 protein bsl2407.